A 98-amino-acid chain; its full sequence is Large ribosomal subunit protein uL23 (98 aa).

The protein belongs to the universal ribosomal protein uL23 family. Part of the 50S ribosomal subunit. Contacts protein L29, and trigger factor when it is bound to the ribosome.

In terms of biological role, one of the early assembly proteins it binds 23S rRNA. One of the proteins that surrounds the polypeptide exit tunnel on the outside of the ribosome. Forms the main docking site for trigger factor binding to the ribosome. The polypeptide is Large ribosomal subunit protein uL23 (Clostridium kluyveri (strain NBRC 12016)).